A 278-amino-acid chain; its full sequence is DNA-directed RNA polymerase subunit alpha (278 aa).

It belongs to the RNA polymerase alpha chain family. In plastids the minimal PEP RNA polymerase catalytic core is composed of four subunits: alpha, beta, beta', and beta''. When a (nuclear-encoded) sigma factor is associated with the core the holoenzyme is formed, which can initiate transcription.

Its subcellular location is the plastid. The protein resides in the chloroplast. It catalyses the reaction RNA(n) + a ribonucleoside 5'-triphosphate = RNA(n+1) + diphosphate. Its function is as follows. DNA-dependent RNA polymerase catalyzes the transcription of DNA into RNA using the four ribonucleoside triphosphates as substrates. In Chlorella vulgaris (Green alga), this protein is DNA-directed RNA polymerase subunit alpha (rpoA).